The following is a 279-amino-acid chain: CDP-paratose synthase (279 aa).

Y115 serves as the catalytic Proton acceptor.

It belongs to the NAD(P)-dependent epimerase/dehydratase family.

The catalysed reaction is CDP-alpha-D-paratose + NADP(+) = CDP-4-dehydro-3,6-dideoxy-alpha-D-glucose + NADPH + H(+). It functions in the pathway nucleotide-sugar biosynthesis; CDP-3,6-dideoxy-D-mannose biosynthesis; CDP-3,6-dideoxy-D-mannose from CTP and alpha-D-glucose 1-phosphate: step 4/5. Functionally, catalyzes synthesis of paratose and tyvelose, unusual 3,6-dideoxyhexose sugars that form part of the O-antigen in the lipopolysaccharides of several enteric bacteria. This is CDP-paratose synthase (rfbS) from Salmonella typhi.